Reading from the N-terminus, the 343-residue chain is S-adenosylmethionine:tRNA ribosyltransferase-isomerase (343 aa).

This sequence belongs to the QueA family. In terms of assembly, monomer.

The protein localises to the cytoplasm. It carries out the reaction 7-aminomethyl-7-carbaguanosine(34) in tRNA + S-adenosyl-L-methionine = epoxyqueuosine(34) in tRNA + adenine + L-methionine + 2 H(+). Its pathway is tRNA modification; tRNA-queuosine biosynthesis. In terms of biological role, transfers and isomerizes the ribose moiety from AdoMet to the 7-aminomethyl group of 7-deazaguanine (preQ1-tRNA) to give epoxyqueuosine (oQ-tRNA). The chain is S-adenosylmethionine:tRNA ribosyltransferase-isomerase from Pelobacter propionicus (strain DSM 2379 / NBRC 103807 / OttBd1).